A 310-amino-acid polypeptide reads, in one-letter code: Oxygen-dependent coproporphyrinogen-III oxidase (310 aa).

Serine 97 lines the substrate pocket. The a divalent metal cation site is built by histidine 101 and histidine 111. The active-site Proton donor is the histidine 111. Residue 113–115 (NFR) coordinates substrate. Positions 150 and 180 each coordinate a divalent metal cation. The tract at residues 245–280 (YVEFNLLYDRGTRFGLEFGGRTESILMSLPPRVVWR) is important for dimerization. A substrate-binding site is contributed by 263-265 (GGR).

This sequence belongs to the aerobic coproporphyrinogen-III oxidase family. In terms of assembly, homodimer. The cofactor is a divalent metal cation.

The protein resides in the cytoplasm. It catalyses the reaction coproporphyrinogen III + O2 + 2 H(+) = protoporphyrinogen IX + 2 CO2 + 2 H2O. The protein operates within porphyrin-containing compound metabolism; protoporphyrin-IX biosynthesis; protoporphyrinogen-IX from coproporphyrinogen-III (O2 route): step 1/1. Involved in the heme biosynthesis. Catalyzes the aerobic oxidative decarboxylation of propionate groups of rings A and B of coproporphyrinogen-III to yield the vinyl groups in protoporphyrinogen-IX. This chain is Oxygen-dependent coproporphyrinogen-III oxidase, found in Coxiella burnetii (strain RSA 493 / Nine Mile phase I).